We begin with the raw amino-acid sequence, 378 residues long: Ribosomal RNA large subunit methyltransferase G (378 aa).

The protein belongs to the methyltransferase superfamily. RlmG family.

The protein localises to the cytoplasm. The enzyme catalyses guanosine(1835) in 23S rRNA + S-adenosyl-L-methionine = N(2)-methylguanosine(1835) in 23S rRNA + S-adenosyl-L-homocysteine + H(+). Specifically methylates the guanine in position 1835 (m2G1835) of 23S rRNA. The protein is Ribosomal RNA large subunit methyltransferase G of Shigella flexneri serotype 5b (strain 8401).